The following is a 245-amino-acid chain: DNA polymerase zeta processivity subunit (245 aa).

Positions R3 to V203 constitute an HORMA domain.

Belongs to the MAD2 family. As to quaternary structure, forms DNA polymerase zeta with REV3. Interacts with REV1.

Its subcellular location is the mitochondrion. Required for DNA damage induced mutagenesis. Involved in DNA repair, mitochondrial DNA repair and translesion synthesis. Has a role in the bypass of abasic (AP) sites. The sequence is that of DNA polymerase zeta processivity subunit (REV7) from Saccharomyces cerevisiae (strain ATCC 204508 / S288c) (Baker's yeast).